A 422-amino-acid chain; its full sequence is Synaptotagmin-1 (422 aa).

Over 1–57 the chain is Vesicular; it reads MVSESHHEALAAPPVTTVATVLPSNATEPASPGEGKEDAFSKLKEKFMNELHKIPLP. An N-linked (GlcNAc...) asparagine glycan is attached at asparagine 25. A helical transmembrane segment spans residues 58-80; sequence PWALIAIAIVAVLLVLTCCFCIC. Residues cysteine 75, cysteine 76, cysteine 78, cysteine 80, and cysteine 83 are each lipidated (S-palmitoyl cysteine). Over 81–422 the chain is Cytoplasmic; it reads KKCLFKKKNK…EVDAMLAVKK (342 aa). The segment at 113 to 142 is disordered; it reads TMKDQALKDDDAETGLTDGEEKEEPKEEEK. Acidic residues predominate over residues 122–134; the sequence is DDAETGLTDGEEK. Threonine 129 carries the post-translational modification Phosphothreonine. The phospholipid binding stretch occupies residues 136–382; it reads EPKEEEKLGK…AIGKVFVGYN (247 aa). In terms of domain architecture, C2 1 spans 142–261; it reads KLGKLQYSLD…DFGHVTEEWR (120 aa). Residues leucine 172, aspartate 173, and aspartate 179 each coordinate Ca(2+). At tyrosine 230 the chain carries Phosphotyrosine. 6 residues coordinate Ca(2+): aspartate 231, phenylalanine 232, aspartate 233, serine 236, lysine 237, and aspartate 239. Serine 265 bears the Phosphoserine mark. Residues 273-406 form the C2 2 domain; the sequence is KLGDICFSLR…NPRRPIAQWH (134 aa). Residues aspartate 304 and aspartate 310 each coordinate Ca(2+). Residues serine 343 and serine 345 each carry the phosphoserine modification. The Ca(2+) site is built by aspartate 364, aspartate 366, and aspartate 372.

The protein belongs to the synaptotagmin family. Homotetramer. Heterodimer; heterodimerizes with SYT2 in presence of calcium. Interacts with SCAMP5. Interacts with STON2. Forms a complex with SV2B, syntaxin 1 and SNAP25. Interacts with SV2A, SV2B and SV2C. Interacts with RIMS1. Interacts with PRRT2. Interacts with DNAJC5 in a phosphorylation-dependent manner. Interacts (via N-terminus) with RAB3A. Interacts with SYT12. Interacts with calmodulin. Interacts with DNM1 (via C-terminal proline-rich domain (PRD)); this interaction facilitates vesicle fission during clathrin-mediated endocytosis (CME). It depends on Ca(2+) as a cofactor. Post-translationally, glycosylated. Expressed in melanocytes.

Its subcellular location is the cytoplasmic vesicle. The protein resides in the secretory vesicle membrane. It is found in the secretory vesicle. The protein localises to the synaptic vesicle membrane. It localises to the chromaffin granule membrane. Its subcellular location is the cytoplasm. Calcium sensor that participates in triggering neurotransmitter release at the synapse. May have a regulatory role in the membrane interactions during trafficking of synaptic vesicles at the active zone of the synapse. It binds acidic phospholipids with a specificity that requires the presence of both an acidic head group and a diacyl backbone. A Ca(2+)-dependent interaction between synaptotagmin and putative receptors for activated protein kinase C has also been reported. It can bind to at least three additional proteins in a Ca(2+)-independent manner; these are neurexins, syntaxin and AP2. Plays a role in dendrite formation by melanocytes. In Homo sapiens (Human), this protein is Synaptotagmin-1.